The sequence spans 344 residues: N-acetyl-gamma-glutamyl-phosphate reductase (344 aa).

Residue C150 is part of the active site.

The protein belongs to the NAGSA dehydrogenase family. Type 1 subfamily.

It is found in the cytoplasm. It carries out the reaction N-acetyl-L-glutamate 5-semialdehyde + phosphate + NADP(+) = N-acetyl-L-glutamyl 5-phosphate + NADPH + H(+). The protein operates within amino-acid biosynthesis; L-arginine biosynthesis; N(2)-acetyl-L-ornithine from L-glutamate: step 3/4. Its function is as follows. Catalyzes the NADPH-dependent reduction of N-acetyl-5-glutamyl phosphate to yield N-acetyl-L-glutamate 5-semialdehyde. This chain is N-acetyl-gamma-glutamyl-phosphate reductase, found in Azotobacter vinelandii (strain DJ / ATCC BAA-1303).